The chain runs to 460 residues: Ribulose bisphosphate carboxylase large chain (460 aa).

Residue Lys-4 is modified to N6,N6,N6-trimethyllysine. 2 residues coordinate substrate: Asn-113 and Thr-163. Residue Lys-165 is the Proton acceptor of the active site. Lys-167 contributes to the substrate binding site. 3 residues coordinate Mg(2+): Lys-191, Asp-193, and Glu-194. Residue Lys-191 is modified to N6-carboxylysine. The active-site Proton acceptor is the His-284. Positions 285, 317, and 369 each coordinate substrate.

This sequence belongs to the RuBisCO large chain family. Type I subfamily. In terms of assembly, heterohexadecamer of 8 large chains and 8 small chains. Requires Mg(2+) as cofactor.

The protein localises to the plastid. It localises to the chloroplast. The enzyme catalyses 2 (2R)-3-phosphoglycerate + 2 H(+) = D-ribulose 1,5-bisphosphate + CO2 + H2O. It carries out the reaction D-ribulose 1,5-bisphosphate + O2 = 2-phosphoglycolate + (2R)-3-phosphoglycerate + 2 H(+). Functionally, ruBisCO catalyzes two reactions: the carboxylation of D-ribulose 1,5-bisphosphate, the primary event in carbon dioxide fixation, as well as the oxidative fragmentation of the pentose substrate in the photorespiration process. Both reactions occur simultaneously and in competition at the same active site. In Cunninghamia lanceolata (China fir), this protein is Ribulose bisphosphate carboxylase large chain.